The chain runs to 215 residues: CASP-like protein 1E1 (215 aa).

Residues 1–51 (MESSRGKPGLNGSGGGAAAFDYSSRRGYYTGAGAALPPLAAGSRAPPVDPC) are Cytoplasmic-facing. Residues 52–72 (CVVLRVFVLLGTLASAVVMAA) traverse the membrane as a helical segment. The Extracellular portion of the chain corresponds to 73–103 (DRQSTTVQIAAGEELAPPLRVPVTAKWTYSS). A helical transmembrane segment spans residues 104-124 (AFVYFVVANAMVFAFSAAALA). At 125-130 (AVRRRS) the chain is on the cytoplasmic side. Residues 131–151 (AVVPVMVGDLVAMALLFSAVG) traverse the membrane as a helical segment. At 152 to 185 (AAAQFGLLGERGNAHVRWAKVCDVYGPFCERAMA) the chain is on the extracellular side. The chain crosses the membrane as a helical span at residues 186–206 (AVVVALIAAFADLVLLMLTIL). At 207–215 (TIHKASSYY) the chain is on the cytoplasmic side.

This sequence belongs to the Casparian strip membrane proteins (CASP) family. In terms of assembly, homodimer and heterodimers.

It localises to the cell membrane. This chain is CASP-like protein 1E1, found in Oryza sativa subsp. japonica (Rice).